A 156-amino-acid polypeptide reads, in one-letter code: Small ribosomal subunit protein uS7 (156 aa).

Belongs to the universal ribosomal protein uS7 family. In terms of assembly, part of the 30S ribosomal subunit. Contacts proteins S9 and S11.

Its function is as follows. One of the primary rRNA binding proteins, it binds directly to 16S rRNA where it nucleates assembly of the head domain of the 30S subunit. Is located at the subunit interface close to the decoding center, probably blocks exit of the E-site tRNA. In Bacillus cereus (strain G9842), this protein is Small ribosomal subunit protein uS7.